The sequence spans 81 residues: Putative membrane protein insertion efficiency factor (81 aa).

Belongs to the UPF0161 family.

The protein resides in the cell inner membrane. In terms of biological role, could be involved in insertion of integral membrane proteins into the membrane. The chain is Putative membrane protein insertion efficiency factor from Legionella pneumophila subsp. pneumophila (strain Philadelphia 1 / ATCC 33152 / DSM 7513).